Here is a 114-residue protein sequence, read N- to C-terminus: Iron-sulfur cluster insertion protein ErpA (114 aa).

Residues cysteine 42, cysteine 106, and cysteine 108 each contribute to the iron-sulfur cluster site.

It belongs to the HesB/IscA family. In terms of assembly, homodimer. It depends on iron-sulfur cluster as a cofactor.

Functionally, required for insertion of 4Fe-4S clusters for at least IspG. The chain is Iron-sulfur cluster insertion protein ErpA from Citrobacter koseri (strain ATCC BAA-895 / CDC 4225-83 / SGSC4696).